The primary structure comprises 165 residues: Protein NKG7 (165 aa).

Transmembrane regions (helical) follow at residues 9-29 (LFAGSLGLTSSLIALTTDFWI), 61-81 (FCILAVLWGLVSVSFLILSCI), 92-112 (LVSTVMAFSAALSILVAMAVY), and 133-153 (FYLGWVSFILFLFAGCLSLGA).

It belongs to the PMP-22/EMP/MP20 family. Predominantly expressed by leukocytes with cytotoxic activity such as CD8(+) T-cells and natural killer cells.

The protein localises to the cell membrane. Its subcellular location is the cytolytic granule membrane. In terms of biological role, regulates cytotoxic granule exocytosis in effector lymphocytes, thus acting as a critical mediator of inflammation in a broad range of infectious and non-infectious diseases. Essential for cytotoxic degranulation of natural killer (NK) cells and CD8(+) T-cells and for the activation of CD4(+) T-cells following infection. Plays a critical role in CD8(+) T-cell and NK cell-mediated cytolysis of target cells and contributes to the cytolytic activity via the perforin/granzyme pathway by enhancing exocytosis of LAMP1-carrying lytic granules. Contributes to NK cell-mediated control of cancer metastasis. This is Protein NKG7 (Nkg7) from Mus musculus (Mouse).